The following is a 328-amino-acid chain: MRIIFWGTPDYSISSLDILIKSNHEIIAVVSQPDKKRSRGNKLIASPIKSFAEQEYIKIYTPEKIRNNIPFINELKSLSCDLFIVIAYGKILPKEILEIPKFGCWNAHASLLPRWRGAAPIQWSLMKGDEYTGVGIMKMSEGLDTGDLLLEEKIKIDNTDNLNTLTEKLSILSAKLLLKAVSFLEKNINKKINSKLTKQNTLGREITYARMIEKSDFKVDWGNEAIKISRKIKALYPRANTNFRGKNLKILKIKVLTSDEIKNAKYHLMSNYSKPGIILAVIENEGIIISTKTDPIILLEAKIEGKNISTKKQLIQQLKPSVGEYFLD.

(6S)-5,6,7,8-tetrahydrofolate is bound at residue 110–113 (SLLP).

This sequence belongs to the Fmt family.

The catalysed reaction is L-methionyl-tRNA(fMet) + (6R)-10-formyltetrahydrofolate = N-formyl-L-methionyl-tRNA(fMet) + (6S)-5,6,7,8-tetrahydrofolate + H(+). Functionally, attaches a formyl group to the free amino group of methionyl-tRNA(fMet). The formyl group appears to play a dual role in the initiator identity of N-formylmethionyl-tRNA by promoting its recognition by IF2 and preventing the misappropriation of this tRNA by the elongation apparatus. The polypeptide is Methionyl-tRNA formyltransferase (Prochlorococcus marinus (strain MIT 9215)).